A 63-amino-acid polypeptide reads, in one-letter code: Large ribosomal subunit protein uL29 (63 aa).

The protein belongs to the universal ribosomal protein uL29 family.

The sequence is that of Large ribosomal subunit protein uL29 from Actinobacillus pleuropneumoniae serotype 5b (strain L20).